Here is a 380-residue protein sequence, read N- to C-terminus: MTIIRKKHPLIKIINHSFIDLPTPSNISSWWNFGSLLGLCLIIQILTGLFLAMHYTSDTTTAFSSVAHICRDVNYGWLIRYMHANGASMFFICLFLHVGRGVYYGSYNMIETWNMGIMLLFTVMATAFMGYVLPWGQMSFWGATVITNLLSAIPYIGSTLVEWIWGGFSVDKATLTRFFAFHFILPFIITALVLVHLLFLHETGSNNPTGLNSDADKIPFHPYYTIKDFLGILILLMASMILTLFFPDILGDPDNFTPANPLNTPPHIKPEWYFLFAYAILRSIPNKLGGVLALILSILILAFMPLLHTSKQRALTFRPITQIMYWTLVADLLILTWIGGQPVEYPFITIGQTASIAYFAIILIFMPITGMIENNILDLD.

The next 4 membrane-spanning stretches (helical) occupy residues 33 to 53, 77 to 98, 113 to 133, and 178 to 198; these read FGSL…FLAM, WLIR…FLHV, WNMG…GYVL, and FFAF…VHLL. Heme b is bound by residues His83 and His97. Heme b contacts are provided by His182 and His196. His201 lines the a ubiquinone pocket. Helical transmembrane passes span 226–246, 288–308, 320–340, and 347–367; these read IKDF…TLFF, LGGV…PLLH, ITQI…WIGG, and FITI…IFMP.

It belongs to the cytochrome b family. The cytochrome bc1 complex contains 11 subunits: 3 respiratory subunits (MT-CYB, CYC1 and UQCRFS1), 2 core proteins (UQCRC1 and UQCRC2) and 6 low-molecular weight proteins (UQCRH/QCR6, UQCRB/QCR7, UQCRQ/QCR8, UQCR10/QCR9, UQCR11/QCR10 and a cleavage product of UQCRFS1). This cytochrome bc1 complex then forms a dimer. Heme b serves as cofactor.

It is found in the mitochondrion inner membrane. In terms of biological role, component of the ubiquinol-cytochrome c reductase complex (complex III or cytochrome b-c1 complex) that is part of the mitochondrial respiratory chain. The b-c1 complex mediates electron transfer from ubiquinol to cytochrome c. Contributes to the generation of a proton gradient across the mitochondrial membrane that is then used for ATP synthesis. The chain is Cytochrome b (MT-CYB) from Microtus oregoni (Creeping vole).